A 118-amino-acid polypeptide reads, in one-letter code: uncharacterized protein (118 aa).

The chain crosses the membrane as a helical span at residues 21-38 (IVYFFFFFGLETFFSIIN).

It localises to the membrane. This is an uncharacterized protein from Dictyostelium discoideum (Social amoeba).